A 171-amino-acid polypeptide reads, in one-letter code: Large ribosomal subunit protein uL22 (171 aa).

It belongs to the universal ribosomal protein uL22 family.

The sequence is that of Large ribosomal subunit protein uL22 (RPL17) from Zea mays (Maize).